We begin with the raw amino-acid sequence, 142 residues long: Ribosome maturation factor RimP (142 aa).

This sequence belongs to the RimP family.

The protein resides in the cytoplasm. Required for maturation of 30S ribosomal subunits. In Aromatoleum aromaticum (strain DSM 19018 / LMG 30748 / EbN1) (Azoarcus sp. (strain EbN1)), this protein is Ribosome maturation factor RimP.